The following is a 364-amino-acid chain: Fructose-bisphosphate aldolase C (364 aa).

Phosphotyrosine is present on Tyr-5. Phosphoserine is present on residues Ser-36, Ser-39, and Ser-45. Arg-56 is a substrate binding site. Lys-111 is subject to N6-acetyllysine. Residue Ser-132 is modified to Phosphoserine. Lys-147 lines the substrate pocket. The active-site Proton acceptor is the Glu-188. The Schiff-base intermediate with dihydroxyacetone-P role is filled by Lys-230.

The protein belongs to the class I fructose-bisphosphate aldolase family. Homotetramer. Interacts with ATP6V1E1.

It carries out the reaction beta-D-fructose 1,6-bisphosphate = D-glyceraldehyde 3-phosphate + dihydroxyacetone phosphate. It functions in the pathway carbohydrate degradation; glycolysis; D-glyceraldehyde 3-phosphate and glycerone phosphate from D-glucose: step 4/4. This Pan troglodytes (Chimpanzee) protein is Fructose-bisphosphate aldolase C (ALDOC).